We begin with the raw amino-acid sequence, 488 residues long: V-type proton ATPase subunit B 1 (488 aa).

Belongs to the ATPase alpha/beta chains family. V-ATPase is a heteromultimeric enzyme composed of a peripheral catalytic V1 complex (main components: subunits A, B, C, D, E, and F) attached to an integral membrane V0 proton pore complex (main component: the proteolipid protein).

In terms of biological role, non-catalytic subunit of the peripheral V1 complex of vacuolar ATPase. V-ATPase is responsible for acidifying a variety of intracellular compartments in eukaryotic cells. This chain is V-type proton ATPase subunit B 1, found in Hordeum vulgare (Barley).